The sequence spans 339 residues: Foldase protein PrsA (339 aa).

The signal sequence occupies residues 1 to 26 (MKHLKNNTKKFTALLFALLFSMSIAG). The N-palmitoyl cysteine moiety is linked to residue Cys27. Cys27 carries S-diacylglycerol cysteine lipidation. The 91-residue stretch at 197 to 287 (KPTFHAQHVL…FGYHVIKLID (91 aa)) folds into the PpiC domain.

The protein belongs to the PrsA family.

Its subcellular location is the cell membrane. It catalyses the reaction [protein]-peptidylproline (omega=180) = [protein]-peptidylproline (omega=0). In terms of biological role, plays a major role in protein secretion by helping the post-translocational extracellular folding of several secreted proteins. In Clostridium tetani (strain Massachusetts / E88), this protein is Foldase protein PrsA.